A 130-amino-acid polypeptide reads, in one-letter code: Small ribosomal subunit protein uS11 (130 aa).

It belongs to the universal ribosomal protein uS11 family. As to quaternary structure, part of the 30S ribosomal subunit. Interacts with proteins S7 and S18. Binds to IF-3.

Its function is as follows. Located on the platform of the 30S subunit, it bridges several disparate RNA helices of the 16S rRNA. Forms part of the Shine-Dalgarno cleft in the 70S ribosome. This Tropheryma whipplei (strain TW08/27) (Whipple's bacillus) protein is Small ribosomal subunit protein uS11.